Here is a 252-residue protein sequence, read N- to C-terminus: Imidazole glycerol phosphate synthase subunit HisF (252 aa).

Catalysis depends on residues Asp-11 and Asp-130.

It belongs to the HisA/HisF family. Heterodimer of HisH and HisF.

The protein localises to the cytoplasm. The catalysed reaction is 5-[(5-phospho-1-deoxy-D-ribulos-1-ylimino)methylamino]-1-(5-phospho-beta-D-ribosyl)imidazole-4-carboxamide + L-glutamine = D-erythro-1-(imidazol-4-yl)glycerol 3-phosphate + 5-amino-1-(5-phospho-beta-D-ribosyl)imidazole-4-carboxamide + L-glutamate + H(+). It participates in amino-acid biosynthesis; L-histidine biosynthesis; L-histidine from 5-phospho-alpha-D-ribose 1-diphosphate: step 5/9. In terms of biological role, IGPS catalyzes the conversion of PRFAR and glutamine to IGP, AICAR and glutamate. The HisF subunit catalyzes the cyclization activity that produces IGP and AICAR from PRFAR using the ammonia provided by the HisH subunit. This chain is Imidazole glycerol phosphate synthase subunit HisF, found in Staphylococcus aureus (strain MRSA252).